The primary structure comprises 263 residues: Palmitoyltransferase ZDHHC22 (263 aa).

Residues 1-9 (MLALRLLNV) are Cytoplasmic-facing. Residues 10–30 (VAPAYFLCISLVTFVLQLFLF) form a helical membrane-spanning segment. At 31–47 (LPSMREDPTATPLFSPA) the chain is on the lumenal side. Residues 48 to 68 (VLHGALFLFLSANALGNYILV) traverse the membrane as a helical segment. At 69-125 (VQNSPDDLGACQGTSSQRPQRPPPSTHFCRVCARVTLRHDHHCFFTGNCIGSRNMRN) the chain is on the cytoplasmic side. Residues 91–131 (PPSTHFCRVCARVTLRHDHHCFFTGNCIGSRNMRNFILFCL) form the DHHC domain. The active-site S-palmitoyl cysteine intermediate is the cysteine 111. Transmembrane regions (helical) follow at residues 126–146 (FILF…AGVA) and 147–167 (YISA…TLLP). Over 168-182 (TSISQFFSGAVLGSD) the chain is Cytoplasmic. The chain crosses the membrane as a helical span at residues 183-203 (MFVILMLYLWFAVGLACAGFC). Residues 204–263 (CHQLLLILRGQTRYQVRKGVAVRARPWRKNLQEVFGKRWLLGLLVPMFNVGTESSKQQDK) are Lumenal-facing.

The protein belongs to the DHHC palmitoyltransferase family. Interacts with CNN3.

It localises to the endoplasmic reticulum membrane. The protein localises to the golgi apparatus membrane. It carries out the reaction L-cysteinyl-[protein] + hexadecanoyl-CoA = S-hexadecanoyl-L-cysteinyl-[protein] + CoA. Its function is as follows. Palmitoyltransferase that could catalyze the addition of palmitate onto various protein substrates and be involved in a variety of cellular processes. Catalyzes the palmitoylation of KCNMA1, regulating localization of KCNMA1 to the plasma membrane. Might also mediate palmitoylation of CNN3. This chain is Palmitoyltransferase ZDHHC22, found in Rattus norvegicus (Rat).